The following is a 114-amino-acid chain: uncharacterized protein (114 aa).

May be associated with transposition functions of transposon Tn903. This is an uncharacterized protein from Escherichia coli.